The sequence spans 572 residues: Acyl-coenzyme A synthetase ACSM2, mitochondrial (572 aa).

The N-terminal 46 residues, 1–46 (MHWLWKIPRLCTFWGTEMFHRTFHMNIKKLMPIQWGHQEVPAKFNF), are a transit peptide targeting the mitochondrion. A CoA-binding site is contributed by Gln-139. Residues 221 to 229 (TSGTSGPPK), 359 to 364 (EIYGQT), Asp-446, and Arg-461 contribute to the ATP site. Thr-364 contributes to the substrate binding site. Residue 469–471 (SGY) coordinates CoA. Arg-472 lines the substrate pocket. CoA is bound by residues Arg-501, Lys-532, and 540 to 542 (YPR). Position 557 (Lys-557) interacts with ATP.

Belongs to the ATP-dependent AMP-binding enzyme family. In terms of assembly, monomer. Requires Mg(2+) as cofactor. Mn(2+) is required as a cofactor. Detected in kidney, in proximal tubules.

It is found in the mitochondrion. The catalysed reaction is a medium-chain fatty acid + ATP + CoA = a medium-chain fatty acyl-CoA + AMP + diphosphate. The enzyme catalyses benzoate + ATP + CoA = benzoyl-CoA + AMP + diphosphate. It carries out the reaction hexanoate + ATP + CoA = hexanoyl-CoA + AMP + diphosphate. It catalyses the reaction butanoate + ATP + CoA = butanoyl-CoA + AMP + diphosphate. The catalysed reaction is octanoate + ATP + CoA = octanoyl-CoA + AMP + diphosphate. The enzyme catalyses decanoate + ATP + CoA = decanoyl-CoA + AMP + diphosphate. Its function is as follows. Catalyzes the activation of fatty acids by CoA to produce an acyl-CoA, the first step in fatty acid metabolism. Capable of activating medium-chain fatty acids (e.g. butyric (C4) to decanoic (C10) acids), and certain carboxylate-containing xenobiotics, e.g. benzoate. The polypeptide is Acyl-coenzyme A synthetase ACSM2, mitochondrial (Acsm2) (Rattus norvegicus (Rat)).